A 134-amino-acid chain; its full sequence is Large ribosomal subunit protein uL22 (134 aa).

The protein belongs to the universal ribosomal protein uL22 family. Part of the 50S ribosomal subunit.

This protein binds specifically to 23S rRNA; its binding is stimulated by other ribosomal proteins, e.g. L4, L17, and L20. It is important during the early stages of 50S assembly. It makes multiple contacts with different domains of the 23S rRNA in the assembled 50S subunit and ribosome. Its function is as follows. The globular domain of the protein is located near the polypeptide exit tunnel on the outside of the subunit, while an extended beta-hairpin is found that lines the wall of the exit tunnel in the center of the 70S ribosome. The protein is Large ribosomal subunit protein uL22 of Porphyromonas gingivalis (strain ATCC 33277 / DSM 20709 / CIP 103683 / JCM 12257 / NCTC 11834 / 2561).